Here is a 349-residue protein sequence, read N- to C-terminus: Protein Wnt-7b (349 aa).

An N-terminal signal peptide occupies residues 1 to 24 (MHRNFRKWIFYVFLCFGVIYVKLG). Cystine bridges form between C73–C84, C123–C131, C133–C152, C200–C214, and C202–C209. N-linked (GlcNAc...) asparagine glycosylation is found at N83 and N127. S206 carries the O-palmitoleoyl serine; by PORCN lipid modification. The disordered linker stretch occupies residues 238-266 (VEVVRASRLRQPTFLKIKQIKSYQKPMET). 6 disulfides stabilise this stretch: C278/C309, C294/C304, C308/C348, C324/C339, C326/C336, and C331/C332. N-linked (GlcNAc...) asparagine glycosylation is present at N295.

The protein belongs to the Wnt family. In terms of processing, palmitoleoylation is required for efficient binding to frizzled receptors. Depalmitoleoylation leads to Wnt signaling pathway inhibition. In terms of tissue distribution, expressed in differentiating lens fiber cells.

The protein resides in the secreted. The protein localises to the extracellular space. It localises to the extracellular matrix. Functionally, ligand for members of the frizzled family of seven transmembrane receptors that functions in the canonical Wnt/beta-catenin signaling pathway. Required for normal fusion of the chorion and the allantois during placenta development. Required for central nervous system (CNS) angiogenesis and blood-brain barrier regulation. The sequence is that of Protein Wnt-7b (WNT7B) from Gallus gallus (Chicken).